We begin with the raw amino-acid sequence, 212 residues long: MLKGKFIVIEGIEGSGKTTICKTLKNILYEHGIKNVICVRDPGSTPLAEKIRSLLITKDKNEYMVNETELLLFYAARIQLIKNIIQPALNKGVWVISDRYFLSSLAYQCAGRKIKEEIVLLLQSLFLKNFNPNITFYLDVTPEIGLNRIKNRNEIDRIEQNTKFFFNNVRNKYLNLIKTKPGIIKINANRKIDKVKHSCKQQMLSWLNTENL.

Residue 11-18 (GIEGSGKT) participates in ATP binding.

The protein belongs to the thymidylate kinase family.

The catalysed reaction is dTMP + ATP = dTDP + ADP. Its function is as follows. Phosphorylation of dTMP to form dTDP in both de novo and salvage pathways of dTTP synthesis. The polypeptide is Thymidylate kinase (Buchnera aphidicola subsp. Baizongia pistaciae (strain Bp)).